The sequence spans 460 residues: UDP-N-acetylmuramoyl-tripeptide--D-alanyl-D-alanine ligase (460 aa).

115 to 121 (GSSGKTS) provides a ligand contact to ATP.

The protein belongs to the MurCDEF family. MurF subfamily.

It localises to the cytoplasm. It carries out the reaction D-alanyl-D-alanine + UDP-N-acetyl-alpha-D-muramoyl-L-alanyl-gamma-D-glutamyl-meso-2,6-diaminopimelate + ATP = UDP-N-acetyl-alpha-D-muramoyl-L-alanyl-gamma-D-glutamyl-meso-2,6-diaminopimeloyl-D-alanyl-D-alanine + ADP + phosphate + H(+). It functions in the pathway cell wall biogenesis; peptidoglycan biosynthesis. In terms of biological role, involved in cell wall formation. Catalyzes the final step in the synthesis of UDP-N-acetylmuramoyl-pentapeptide, the precursor of murein. The chain is UDP-N-acetylmuramoyl-tripeptide--D-alanyl-D-alanine ligase from Buchnera aphidicola subsp. Baizongia pistaciae (strain Bp).